Here is a 177-residue protein sequence, read N- to C-terminus: MALDELKSAIPDFAKDLKLNLGSVIGNSDLPQQQLWGTVLACAIASRSPKVLRELEPEAKANLSAEAYTAAKSAAAIMAMNNVFYRTRHLLSDPEYGTLRAGLRMNVIGNPGVEKVDFELWSLAVSAINGCGQCLDSHEQVLRKAGVDRETIQEAVKVASVIQAVGVTLDAEAVLAE.

Cys-131 serves as the catalytic Proton donor. An intrachain disulfide couples Cys-131 to Cys-134. The active-site Cysteine sulfenic acid (-SOH) intermediate is the Cys-134.

This sequence belongs to the AhpD family. In terms of assembly, homotrimer.

The enzyme catalyses N(6)-[(R)-dihydrolipoyl]-L-lysyl-[lipoyl-carrier protein] + a hydroperoxide = N(6)-[(R)-lipoyl]-L-lysyl-[lipoyl-carrier protein] + an alcohol + H2O. In terms of biological role, antioxidant protein with alkyl hydroperoxidase activity. Required for the reduction of the AhpC active site cysteine residues and for the regeneration of the AhpC enzyme activity. This chain is Alkyl hydroperoxide reductase AhpD, found in Streptomyces griseus subsp. griseus (strain JCM 4626 / CBS 651.72 / NBRC 13350 / KCC S-0626 / ISP 5235).